The primary structure comprises 344 residues: Phosphoribosylformylglycinamidine cyclo-ligase (344 aa).

The protein belongs to the AIR synthase family.

It localises to the cytoplasm. The catalysed reaction is 2-formamido-N(1)-(5-O-phospho-beta-D-ribosyl)acetamidine + ATP = 5-amino-1-(5-phospho-beta-D-ribosyl)imidazole + ADP + phosphate + H(+). It participates in purine metabolism; IMP biosynthesis via de novo pathway; 5-amino-1-(5-phospho-D-ribosyl)imidazole from N(2)-formyl-N(1)-(5-phospho-D-ribosyl)glycinamide: step 2/2. The protein is Phosphoribosylformylglycinamidine cyclo-ligase of Leptospira interrogans serogroup Icterohaemorrhagiae serovar Lai (strain 56601).